A 651-amino-acid polypeptide reads, in one-letter code: DNA ligase (651 aa).

NAD(+)-binding positions include 32–36, 75–76, and Glu106; these read DAEYD and SL. The active-site N6-AMP-lysine intermediate is Lys108. NAD(+) contacts are provided by Arg129, Glu164, Lys271, and Lys295. 4 residues coordinate Zn(2+): Cys389, Cys392, Cys405, and Cys411. Positions 575-651 constitute a BRCT domain; the sequence is SSDSFLNNKI…LDEEQWNRLC (77 aa).

Belongs to the NAD-dependent DNA ligase family. LigA subfamily. Mg(2+) serves as cofactor. Requires Mn(2+) as cofactor.

It catalyses the reaction NAD(+) + (deoxyribonucleotide)n-3'-hydroxyl + 5'-phospho-(deoxyribonucleotide)m = (deoxyribonucleotide)n+m + AMP + beta-nicotinamide D-nucleotide.. DNA ligase that catalyzes the formation of phosphodiester linkages between 5'-phosphoryl and 3'-hydroxyl groups in double-stranded DNA using NAD as a coenzyme and as the energy source for the reaction. It is essential for DNA replication and repair of damaged DNA. The sequence is that of DNA ligase from Wolbachia pipientis subsp. Culex pipiens (strain wPip).